The following is a 101-amino-acid chain: Small ribosomal subunit protein uS14 (101 aa).

Over residues 1–11 the composition is skewed to basic and acidic residues; that stretch reads MAKKSAIETNE. Positions 1–20 are disordered; sequence MAKKSAIETNERRRKLATGH.

The protein belongs to the universal ribosomal protein uS14 family. As to quaternary structure, part of the 30S ribosomal subunit. Contacts proteins S3 and S10.

Functionally, binds 16S rRNA, required for the assembly of 30S particles and may also be responsible for determining the conformation of the 16S rRNA at the A site. The protein is Small ribosomal subunit protein uS14 of Xanthobacter autotrophicus (strain ATCC BAA-1158 / Py2).